The chain runs to 64 residues: UPF0337 protein SAR0874 (64 aa).

The tract at residues 1–40 is disordered; it reads MADESKFEQAKGNVKETVGNVTDNKNLENEGKEDKASGKA. Residues 25 to 40 show a composition bias toward basic and acidic residues; sequence KNLENEGKEDKASGKA.

This sequence belongs to the UPF0337 (CsbD) family.

The polypeptide is UPF0337 protein SAR0874 (Staphylococcus aureus (strain MRSA252)).